Reading from the N-terminus, the 103-residue chain is Pyrimidine/purine nucleoside phosphorylase (103 aa).

Belongs to the nucleoside phosphorylase PpnP family.

The catalysed reaction is a purine D-ribonucleoside + phosphate = a purine nucleobase + alpha-D-ribose 1-phosphate. The enzyme catalyses adenosine + phosphate = alpha-D-ribose 1-phosphate + adenine. It catalyses the reaction cytidine + phosphate = cytosine + alpha-D-ribose 1-phosphate. It carries out the reaction guanosine + phosphate = alpha-D-ribose 1-phosphate + guanine. The catalysed reaction is inosine + phosphate = alpha-D-ribose 1-phosphate + hypoxanthine. The enzyme catalyses thymidine + phosphate = 2-deoxy-alpha-D-ribose 1-phosphate + thymine. It catalyses the reaction uridine + phosphate = alpha-D-ribose 1-phosphate + uracil. It carries out the reaction xanthosine + phosphate = alpha-D-ribose 1-phosphate + xanthine. In terms of biological role, catalyzes the phosphorolysis of diverse nucleosides, yielding D-ribose 1-phosphate and the respective free bases. Can use uridine, adenosine, guanosine, cytidine, thymidine, inosine and xanthosine as substrates. Also catalyzes the reverse reactions. This Shewanella oneidensis (strain ATCC 700550 / JCM 31522 / CIP 106686 / LMG 19005 / NCIMB 14063 / MR-1) protein is Pyrimidine/purine nucleoside phosphorylase.